We begin with the raw amino-acid sequence, 195 residues long: UDP-N-acetylbacillosamine N-acetyltransferase (195 aa).

Residues 13–15 (SGH), 35–36 (DD), and Gly56 each bind substrate. Catalysis depends on His125, which acts as the Proton acceptor. Residues His134, Ile155, and Gly173 each contribute to the acetyl-CoA site.

It belongs to the transferase hexapeptide repeat family. As to quaternary structure, homotrimer.

The enzyme catalyses UDP-N-acetylbacillosamine + acetyl-CoA = UDP-N,N'-diacetylbacillosamine + CoA + H(+). It participates in protein modification; protein glycosylation. Functionally, acetyltransferase that modifies the UDP-4-amino-sugar to form UDP-N,N'-diacetylbacillosamine in the N-linked protein glycosylation pathway. The sequence is that of UDP-N-acetylbacillosamine N-acetyltransferase (pglD) from Campylobacter jejuni subsp. jejuni serotype O:2 (strain ATCC 700819 / NCTC 11168).